A 187-amino-acid polypeptide reads, in one-letter code: uncharacterized protein (187 aa).

This is an uncharacterized protein from Acanthamoeba polyphaga mimivirus (APMV).